We begin with the raw amino-acid sequence, 187 residues long: Putative lipoprotein LppJ (187 aa).

The first 28 residues, 1-28, serve as a signal peptide directing secretion; that stretch reads MPHSTADRRLRLTRQALLAAAVVPLLAG. Cys-29 carries N-palmitoyl cysteine lipidation. Cys-29 carries S-diacylglycerol cysteine lipidation.

The protein localises to the cell membrane. The sequence is that of Putative lipoprotein LppJ (lppJ) from Mycobacterium tuberculosis (strain CDC 1551 / Oshkosh).